A 399-amino-acid polypeptide reads, in one-letter code: 3-methyl-2-oxobutanoate hydroxymethyltransferase 2, mitochondrial (399 aa).

The N-terminal 90 residues, 1 to 90 (MSFSRLLTPR…ARRVTLATLR (90 aa)), are a transit peptide targeting the mitochondrion. Residues Asp-125 and Asp-164 each contribute to the Mg(2+) site. Residues 125–126 (DS), Asp-164, and Lys-194 each bind 3-methyl-2-oxobutanoate. Glu-196 provides a ligand contact to Mg(2+). The Proton acceptor role is filled by Glu-264.

This sequence belongs to the PanB family. Mg(2+) is required as a cofactor.

The protein resides in the mitochondrion. The enzyme catalyses 3-methyl-2-oxobutanoate + (6R)-5,10-methylene-5,6,7,8-tetrahydrofolate + H2O = 2-dehydropantoate + (6S)-5,6,7,8-tetrahydrofolate. It functions in the pathway cofactor biosynthesis; (R)-pantothenate biosynthesis; (R)-pantoate from 3-methyl-2-oxobutanoate: step 1/2. Catalyzes the reversible reaction in which hydroxymethyl group from 5,10-methylenetetrahydrofolate is transferred onto alpha-ketoisovalerate to form ketopantoate. The polypeptide is 3-methyl-2-oxobutanoate hydroxymethyltransferase 2, mitochondrial (KPHMT2) (Oryza sativa subsp. japonica (Rice)).